Reading from the N-terminus, the 435-residue chain is ATP-dependent protease ATPase subunit HslU (435 aa).

ATP contacts are provided by residues Ile18, 60 to 65 (GVGKTE), Asp248, Glu313, and Arg385.

It belongs to the ClpX chaperone family. HslU subfamily. A double ring-shaped homohexamer of HslV is capped on each side by a ring-shaped HslU homohexamer. The assembly of the HslU/HslV complex is dependent on binding of ATP.

It localises to the cytoplasm. ATPase subunit of a proteasome-like degradation complex; this subunit has chaperone activity. The binding of ATP and its subsequent hydrolysis by HslU are essential for unfolding of protein substrates subsequently hydrolyzed by HslV. HslU recognizes the N-terminal part of its protein substrates and unfolds these before they are guided to HslV for hydrolysis. This Agrobacterium fabrum (strain C58 / ATCC 33970) (Agrobacterium tumefaciens (strain C58)) protein is ATP-dependent protease ATPase subunit HslU.